The primary structure comprises 100 residues: uncharacterized protein (100 aa).

The next 3 helical transmembrane spans lie at 11–33 (VWSI…SVLM), 45–64 (WMLA…SLVY), and 68–90 (WEGA…GYLI).

The protein localises to the cell membrane. This is an uncharacterized protein from Bacillus subtilis (strain 168).